Consider the following 471-residue polypeptide: Tryptophanase (471 aa).

Residues Lys-5, Lys-115, and Lys-156 each carry the N6-acetyllysine modification. Lys-270 bears the N6-(pyridoxal phosphate)lysine mark. Lys-450 carries the post-translational modification N6-acetyllysine.

The protein belongs to the beta-eliminating lyase family. In terms of assembly, homotetramer. The cofactor is pyridoxal 5'-phosphate.

It catalyses the reaction L-tryptophan + H2O = indole + pyruvate + NH4(+). Its pathway is amino-acid degradation; L-tryptophan degradation via pyruvate pathway; indole and pyruvate from L-tryptophan: step 1/1. In Escherichia coli O157:H7, this protein is Tryptophanase (tnaA).